The primary structure comprises 209 residues: dITP/XTP pyrophosphatase (209 aa).

Residue 7–12 (SSHGYK) coordinates substrate. D70 serves as the catalytic Proton acceptor. D70 serves as a coordination point for Mg(2+). Residues S71, 154 to 157 (FGYD), K177, and 182 to 183 (HR) contribute to the substrate site.

This sequence belongs to the HAM1 NTPase family. As to quaternary structure, homodimer. The cofactor is Mg(2+).

It carries out the reaction XTP + H2O = XMP + diphosphate + H(+). The catalysed reaction is dITP + H2O = dIMP + diphosphate + H(+). It catalyses the reaction ITP + H2O = IMP + diphosphate + H(+). In terms of biological role, pyrophosphatase that catalyzes the hydrolysis of nucleoside triphosphates to their monophosphate derivatives, with a high preference for the non-canonical purine nucleotides XTP (xanthosine triphosphate), dITP (deoxyinosine triphosphate) and ITP. Seems to function as a house-cleaning enzyme that removes non-canonical purine nucleotides from the nucleotide pool, thus preventing their incorporation into DNA/RNA and avoiding chromosomal lesions. The polypeptide is dITP/XTP pyrophosphatase (Chlamydia muridarum (strain MoPn / Nigg)).